The following is a 367-amino-acid chain: NADH-quinone oxidoreductase subunit D (367 aa).

This sequence belongs to the complex I 49 kDa subunit family. NDH-1 is composed of 14 different subunits. Subunits NuoB, C, D, E, F, and G constitute the peripheral sector of the complex.

It localises to the cell inner membrane. It catalyses the reaction a quinone + NADH + 5 H(+)(in) = a quinol + NAD(+) + 4 H(+)(out). NDH-1 shuttles electrons from NADH, via FMN and iron-sulfur (Fe-S) centers, to quinones in the respiratory chain. The immediate electron acceptor for the enzyme in this species is believed to be ubiquinone. Couples the redox reaction to proton translocation (for every two electrons transferred, four hydrogen ions are translocated across the cytoplasmic membrane), and thus conserves the redox energy in a proton gradient. The polypeptide is NADH-quinone oxidoreductase subunit D (Thermosipho melanesiensis (strain DSM 12029 / CIP 104789 / BI429)).